The following is a 163-amino-acid chain: Small ribosomal subunit protein eS10A (163 aa).

The interval 92–163 (LTQTTRSNAV…GFGRASRYDN (72 aa)) is disordered. Gly residues predominate over residues 105–116 (GGPGGPGGGFGG).

Belongs to the eukaryotic ribosomal protein eS10 family.

The protein localises to the cytoplasm. This Drosophila melanogaster (Fruit fly) protein is Small ribosomal subunit protein eS10A (RpS10a).